The primary structure comprises 864 residues: Leucine--tRNA ligase (864 aa).

The short motif at 42 to 52 (PYPSGRLHMGH) is the 'HIGH' region element. A 'KMSKS' region motif is present at residues 621–625 (KMSKS). Position 624 (Lys-624) interacts with ATP.

It belongs to the class-I aminoacyl-tRNA synthetase family.

It localises to the cytoplasm. The enzyme catalyses tRNA(Leu) + L-leucine + ATP = L-leucyl-tRNA(Leu) + AMP + diphosphate. In Alkalilimnicola ehrlichii (strain ATCC BAA-1101 / DSM 17681 / MLHE-1), this protein is Leucine--tRNA ligase.